Reading from the N-terminus, the 307-residue chain is MKAGIIYNEGKPLAVELAAHVRRILELQGWEVHMATGIGGILGYSRPDSPVCHTPIDQLVPPGFDASMAFAVVLGGDGTVLSAFRQLAPCEIPLLTINTGHLGFLTEGYVADLEPALDQVLRGDYTIEDRTMLTVQVLRDQTVIWEALSLNEMVIHKEPLTGMCHFEVDVGAHARVDIAADGLILSTPTGSTAYALSAGGPVITPGVAALQLVPICPHSLASRALVFSNSEPVWIYPANPFKHLILVVDGNAGCYIQPEDQVFVQRAPYRARFIRLRAPEFFHVLQQKLGWGLPHVAKPRAKKSTDS.

Catalysis depends on aspartate 77, which acts as the Proton acceptor. Residues 77–78 (DG), 151–152 (NE), aspartate 181, 192–197 (TAYALS), and asparagine 251 each bind NAD(+).

It belongs to the NAD kinase family. A divalent metal cation serves as cofactor.

It is found in the cytoplasm. It catalyses the reaction NAD(+) + ATP = ADP + NADP(+) + H(+). Its function is as follows. Involved in the regulation of the intracellular balance of NAD and NADP, and is a key enzyme in the biosynthesis of NADP. Catalyzes specifically the phosphorylation on 2'-hydroxyl of the adenosine moiety of NAD to yield NADP. The polypeptide is NAD kinase 2 (Thermosynechococcus vestitus (strain NIES-2133 / IAM M-273 / BP-1)).